A 340-amino-acid polypeptide reads, in one-letter code: Ferrochelatase (340 aa).

Fe cation-binding residues include His-218 and Glu-298.

This sequence belongs to the ferrochelatase family.

Its subcellular location is the cytoplasm. It catalyses the reaction heme b + 2 H(+) = protoporphyrin IX + Fe(2+). The protein operates within porphyrin-containing compound metabolism; protoheme biosynthesis; protoheme from protoporphyrin-IX: step 1/1. Functionally, catalyzes the ferrous insertion into protoporphyrin IX. The protein is Ferrochelatase of Wolbachia sp. subsp. Brugia malayi (strain TRS).